A 388-amino-acid chain; its full sequence is Putative F-box protein At3g17490 (388 aa).

An F-box domain is found at 1–46; it reads MMMPHLSEDLVEEILSRVPAISLKRLRYTCKQWNALFNDQRFSKKH.

The protein is Putative F-box protein At3g17490 of Arabidopsis thaliana (Mouse-ear cress).